We begin with the raw amino-acid sequence, 313 residues long: Olfactory receptor 10P1 (313 aa).

Over 1-25 (MAGENHTTLPEFLLLGFSDLKALQG) the chain is Extracellular. Asparagine 5 is a glycosylation site (N-linked (GlcNAc...) asparagine). A helical transmembrane segment spans residues 26–46 (PLFWVVLLVYLVTLLGNSLII). Over 47 to 54 (LLTQVSPA) the chain is Cytoplasmic. A helical membrane pass occupies residues 55–75 (LHSPMYFFLRQLSVVELFYTT). Residues 76 to 100 (DIVPRTLANLGSPHPQAISFQGCAA) lie on the Extracellular side of the membrane. The chain crosses the membrane as a helical span at residues 101-121 (QMYVFIVLGISECCLLTAMAY). Over 122–140 (DRYVAICQPLRYSTLLSPR) the chain is Cytoplasmic. The helical transmembrane segment at 141 to 161 (ACMAMVGTSWLTGIITATTHA) threads the bilayer. Topologically, residues 162-198 (SLIFSLPFRSHPIIPHFLCDILPVLRLASAGKHRSEI) are extracellular. A helical transmembrane segment spans residues 199 to 218 (SVMTATIVFIMIPFSLIVTS). Topologically, residues 219–238 (YIRILGAILAMASTQSRRKV) are cytoplasmic. A helical transmembrane segment spans residues 239 to 259 (FSTCSSHLLVVSLFFGTASIT). The Extracellular segment spans residues 260 to 272 (YIRPQAGSSVTTD). A helical membrane pass occupies residues 273-293 (RVLSLFYTVITPMLNPIIYTL). Topologically, residues 294-313 (RNKDVRRALRHLVKRQRPSP) are cytoplasmic.

It belongs to the G-protein coupled receptor 1 family.

It localises to the cell membrane. Its function is as follows. Odorant receptor. The polypeptide is Olfactory receptor 10P1 (OR10P1) (Homo sapiens (Human)).